The following is a 372-amino-acid chain: Glutamate 5-kinase (372 aa).

Lys14 contributes to the ATP binding site. 3 residues coordinate substrate: Ser54, Asp141, and Asn153. Position 173-174 (173-174 (TD)) interacts with ATP. Residues 280 to 358 (RGRVVIDAGA…SEIESVLGHL (79 aa)) form the PUA domain.

The protein belongs to the glutamate 5-kinase family.

The protein localises to the cytoplasm. The enzyme catalyses L-glutamate + ATP = L-glutamyl 5-phosphate + ADP. Its pathway is amino-acid biosynthesis; L-proline biosynthesis; L-glutamate 5-semialdehyde from L-glutamate: step 1/2. Catalyzes the transfer of a phosphate group to glutamate to form L-glutamate 5-phosphate. The sequence is that of Glutamate 5-kinase from Cupriavidus pinatubonensis (strain JMP 134 / LMG 1197) (Cupriavidus necator (strain JMP 134)).